The chain runs to 517 residues: Crotonobetaine/carnitine--CoA ligase (517 aa).

It belongs to the ATP-dependent AMP-binding enzyme family.

The enzyme catalyses 4-(trimethylamino)butanoate + ATP + CoA = 4-(trimethylamino)butanoyl-CoA + AMP + diphosphate. The catalysed reaction is crotonobetaine + ATP + CoA = crotonobetainyl-CoA + AMP + diphosphate. It catalyses the reaction (R)-carnitine + ATP + CoA = (R)-carnitinyl-CoA + AMP + diphosphate. It participates in amine and polyamine metabolism; carnitine metabolism. Catalyzes the transfer of CoA to carnitine, generating the initial carnitinyl-CoA needed for the CaiB reaction cycle. Also has activity toward crotonobetaine and gamma-butyrobetaine. In Shigella dysenteriae serotype 1 (strain Sd197), this protein is Crotonobetaine/carnitine--CoA ligase.